Here is a 617-residue protein sequence, read N- to C-terminus: Chitin elicitor receptor kinase 1 (617 aa).

The first 23 residues, 1–23, serve as a signal peptide directing secretion; sequence MKLKISLIAPILLLFSFFFAVES. Over 24–232 the chain is Extracellular; the sequence is KCRTSCPLAL…KSSKQDGVGA (209 aa). 3 cysteine pairs are disulfide-bonded: Cys25–Cys93, Cys29–Cys155, and Cys91–Cys153. Residues Asn40, Asn52, and Asn102 are each glycosylated (N-linked (GlcNAc...) asparagine). A LysM 1; degenerate domain is found at 46 to 74; the sequence is VINQNLNSSIAPYDQINFDPILRYNSNIK. The 33-residue stretch at 108–140 folds into the LysM 2; degenerate domain; the sequence is RQEDTYERVAISNYANLTTMESLQARNPFPATN. Chitin is bound at residue 109 to 115; that stretch reads QEDTYER. A glycan (N-linked (GlcNAc...) asparagine) is linked at Asn123. Residue 137–143 coordinates chitin; the sequence is PATNIPL. Asn152 is a glycosylation site (N-linked (GlcNAc...) asparagine). The LysM 3 domain maps to 168 to 211; sequence VTYPLRPEDSLSSIARSSGVSADILQRYNPGVNFNSGNGIVYVP. The chain crosses the membrane as a helical span at residues 233–253; the sequence is GVIAGIVIGVIVALLLILFIV. Over 254–617 the chain is Cytoplasmic; that stretch reads YYAYRKNKSK…EDLVSLMSGR (364 aa). Residues Ser266, Ser268, and Ser274 each carry the phosphoserine modification. One can recognise a Protein kinase domain in the interval 322–594; that stretch reads FNLSFKIGQG…YIVVALSTLF (273 aa). ATP is bound by residues 328 to 336 and Lys349; that span reads IGQGGFGAV. Tyr390 is modified (phosphotyrosine). Asp441 functions as the Proton acceptor in the catalytic mechanism. Residues Thr479 and Thr519 each carry the phosphothreonine modification.

It belongs to the protein kinase superfamily. Ser/Thr protein kinase family. Forms homodimers and homooligomers. Homodimerization is required to trigger plant defenses. Binds to chitin, chitosan and chito-oligomer oligosaccharide elicitors. Interaction with chitin octamer (NAG(8)) promotes homodimerization while shorter chitin oligomers inhibit homodimerization. Interacts with Pseudomonas syringae hopAB2/avrPtoB. Interacts (preferentially when unphosphorylated) with PBL27 at the plasma membrane. Binds to IOS1. In terms of processing, autophosphorylated. Autophosphorylation is induced by chitin and derivatives. Post-translationally, ubiquitinated and targeted to the proteasome by hopAB2/avrPtoB of Pseudomonas syringae pv. tomato DC3000. As to expression, expressed ubiquitously, with lowest expression in pollen.

It is found in the cell membrane. It carries out the reaction L-seryl-[protein] + ATP = O-phospho-L-seryl-[protein] + ADP + H(+). It catalyses the reaction L-threonyl-[protein] + ATP = O-phospho-L-threonyl-[protein] + ADP + H(+). Activated by chitin-mediated homodimerization. In terms of biological role, lysin motif (LysM) receptor kinase that functions as a cell surface receptor in chitin elicitor (chitooligosaccharides) signaling leading to innate immunity toward both biotic and abiotic stresses (e.g. tolerance to salinity, heavy-metal stresses, and Botrytis cinerea infection). Recognizes microbe-derived N-acetylglucosamine (NAG)-containing ligands. Involved in the resistance to pathogenic fungi Alternaria brassicicola and Erysiphe cichoracearum, probably by sensing microbe-associated molecular patterns (MAMP) and pathogen-associated molecular patterns (PAMP). Plays an essential role in detecting peptidoglycans (e.g. PGNs) and restricting bacterial growth. Target of the bacterial type III effector E3-ligase protein hopAB2/avrPtoB of Pseudomonas syringae pv. tomato DC3000 that mediates ubiquitination and subsequent proteolysis, thus blocking all defense responses by suppressing PAMP-triggered immunity (PTI). Mediates chitin-induced phosphorylation of PBL27. The protein is Chitin elicitor receptor kinase 1 (CERK1) of Arabidopsis thaliana (Mouse-ear cress).